Consider the following 378-residue polypeptide: tRNA-specific 2-thiouridylase MnmA (378 aa).

Residues 9–16 (GVSGGVDS) and M35 each bind ATP. The tract at residues 94–96 (NPD) is interaction with target base in tRNA. C99 serves as the catalytic Nucleophile. An intrachain disulfide couples C99 to C195. ATP is bound at residue G123. The tract at residues 145 to 147 (KDQ) is interaction with tRNA. The active-site Cysteine persulfide intermediate is C195. The segment at 307 to 308 (RY) is interaction with tRNA.

The protein belongs to the MnmA/TRMU family.

Its subcellular location is the cytoplasm. It carries out the reaction S-sulfanyl-L-cysteinyl-[protein] + uridine(34) in tRNA + AH2 + ATP = 2-thiouridine(34) in tRNA + L-cysteinyl-[protein] + A + AMP + diphosphate + H(+). Catalyzes the 2-thiolation of uridine at the wobble position (U34) of tRNA, leading to the formation of s(2)U34. The protein is tRNA-specific 2-thiouridylase MnmA of Xanthomonas campestris pv. campestris (strain 8004).